The following is a 92-amino-acid chain: Small ribosomal subunit protein uS19 (92 aa).

The disordered stretch occupies residues Glu-73–Arg-92.

Belongs to the universal ribosomal protein uS19 family.

Its function is as follows. Protein S19 forms a complex with S13 that binds strongly to the 16S ribosomal RNA. The polypeptide is Small ribosomal subunit protein uS19 (Maricaulis maris (strain MCS10) (Caulobacter maris)).